We begin with the raw amino-acid sequence, 258 residues long: Ciliogenesis and planar polarity effector 2 (258 aa).

The interval 51–258 (IDTASYKIFV…LPSSPESAPG (208 aa)) is small GTPase-like. 12 residues coordinate GTP: serine 64, glycine 65, glycine 67, lysine 68, threonine 69, alanine 70, isoleucine 82, histidine 84, threonine 87, lysine 176, aspartate 178, and serine 206.

Belongs to the small GTPase superfamily. Rab family. Interacts with FUZ. Associates with the CPLANE (ciliogenesis and planar polarity effectors) complex via its interaction with FUZ.

The protein resides in the cytoplasm. The protein localises to the cytoskeleton. It is found in the cilium basal body. It localises to the microtubule organizing center. Its subcellular location is the centrosome. The protein resides in the centriole. In terms of biological role, required for efficient primary cilia initiation, regulating a late step in cilia initiation. Plays a role in the final maturation of the mother centriole and ciliary vesicle that allows extension of the ciliary axoneme. The protein is Ciliogenesis and planar polarity effector 2 (Cplane2) of Mus musculus (Mouse).